The chain runs to 518 residues: 3-octaprenyl-4-hydroxybenzoate carboxy-lyase (518 aa).

Asparagine 177 contacts Mn(2+). Prenylated FMN contacts are provided by residues 180–182 (IYR), 194–196 (RWL), and 199–200 (RG). Residue glutamate 243 participates in Mn(2+) binding. The Proton donor role is filled by aspartate 318.

It belongs to the UbiD family. As to quaternary structure, homohexamer. It depends on prenylated FMN as a cofactor. The cofactor is Mn(2+).

It localises to the cell membrane. The catalysed reaction is a 4-hydroxy-3-(all-trans-polyprenyl)benzoate + H(+) = a 2-(all-trans-polyprenyl)phenol + CO2. Its pathway is cofactor biosynthesis; ubiquinone biosynthesis. Catalyzes the decarboxylation of 3-octaprenyl-4-hydroxy benzoate to 2-octaprenylphenol, an intermediate step in ubiquinone biosynthesis. This Burkholderia multivorans (strain ATCC 17616 / 249) protein is 3-octaprenyl-4-hydroxybenzoate carboxy-lyase.